A 284-amino-acid chain; its full sequence is Pantothenate synthetase (284 aa).

ATP is bound at residue 30–37 (MGNLHQGH). The active-site Proton donor is the histidine 37. (R)-pantoate is bound at residue glutamine 61. Glutamine 61 contacts beta-alanine. Residue 149-152 (GQKD) coordinates ATP. (R)-pantoate is bound at residue glutamine 155. Residues valine 178 and 186–189 (LSSR) each bind ATP.

It belongs to the pantothenate synthetase family. In terms of assembly, homodimer.

Its subcellular location is the cytoplasm. It catalyses the reaction (R)-pantoate + beta-alanine + ATP = (R)-pantothenate + AMP + diphosphate + H(+). It participates in cofactor biosynthesis; (R)-pantothenate biosynthesis; (R)-pantothenate from (R)-pantoate and beta-alanine: step 1/1. Its function is as follows. Catalyzes the condensation of pantoate with beta-alanine in an ATP-dependent reaction via a pantoyl-adenylate intermediate. The protein is Pantothenate synthetase of Aeromonas salmonicida (strain A449).